Here is a 305-residue protein sequence, read N- to C-terminus: MNEVFESYLTYSAGVRQFTKATIDSYKNDLIIFEEWLKELDLNIFELKASDIRIFIAELADKKIAPASINRMMSTLRGFYKYALRFNLTKMNPISSVRNLKLAQKLPVFMFPKQAQEFCRLPSNAGILWETRDAALFASLYSTGCRVSELAGLDIKDLDKTLSYAIVFGKGKKERKVFFAEFAKEYLREYLKERSDLVEKFKGQVQKDGKGKIRDTLFINQKAQPLTSRGIRYIIDRYVELSPELKHLSPHAFRHSFASTLITRGADIRVVQELLGHESVSTTQRYTHITAEQLQNLYKTAHPHS.

One can recognise a Core-binding (CB) domain in the interval 1–84; that stretch reads MNEVFESYLT…TLRGFYKYAL (84 aa). One can recognise a Tyr recombinase domain in the interval 105-299; that stretch reads KLPVFMFPKQ…TAEQLQNLYK (195 aa). Residues Arg-146, Lys-170, His-251, Arg-254, and His-277 contribute to the active site. Tyr-286 acts as the O-(3'-phospho-DNA)-tyrosine intermediate in catalysis.

The protein belongs to the 'phage' integrase family. XerC subfamily. In terms of assembly, forms a cyclic heterotetrameric complex composed of two molecules of XerC and two molecules of XerD.

The protein localises to the cytoplasm. Its function is as follows. Site-specific tyrosine recombinase, which acts by catalyzing the cutting and rejoining of the recombining DNA molecules. The XerC-XerD complex is essential to convert dimers of the bacterial chromosome into monomers to permit their segregation at cell division. It also contributes to the segregational stability of plasmids. This is Tyrosine recombinase XerC from Treponema denticola (strain ATCC 35405 / DSM 14222 / CIP 103919 / JCM 8153 / KCTC 15104).